A 72-amino-acid polypeptide reads, in one-letter code: UPF0270 protein KPN78578_37030 (72 aa).

It belongs to the UPF0270 family.

The protein is UPF0270 protein KPN78578_37030 of Klebsiella pneumoniae subsp. pneumoniae (strain ATCC 700721 / MGH 78578).